The chain runs to 463 residues: Ribulose bisphosphate carboxylase large chain (463 aa).

N6,N6,N6-trimethyllysine is present on Lys-5. Positions 114 and 164 each coordinate substrate. Lys-166 serves as the catalytic Proton acceptor. Lys-168 is a binding site for substrate. Mg(2+) contacts are provided by Lys-192, Asp-194, and Glu-195. Lys-192 is subject to N6-carboxylysine. His-285 acts as the Proton acceptor in catalysis. Residues Arg-286, His-318, and Ser-370 each coordinate substrate.

Belongs to the RuBisCO large chain family. Type I subfamily. Heterohexadecamer of 8 large chains and 8 small chains; disulfide-linked. The disulfide link is formed within the large subunit homodimers. Mg(2+) serves as cofactor. In terms of processing, the disulfide bond which can form in the large chain dimeric partners within the hexadecamer appears to be associated with oxidative stress and protein turnover.

It is found in the plastid. It localises to the chloroplast. The catalysed reaction is 2 (2R)-3-phosphoglycerate + 2 H(+) = D-ribulose 1,5-bisphosphate + CO2 + H2O. It catalyses the reaction D-ribulose 1,5-bisphosphate + O2 = 2-phosphoglycolate + (2R)-3-phosphoglycerate + 2 H(+). Functionally, ruBisCO catalyzes two reactions: the carboxylation of D-ribulose 1,5-bisphosphate, the primary event in carbon dioxide fixation, as well as the oxidative fragmentation of the pentose substrate in the photorespiration process. Both reactions occur simultaneously and in competition at the same active site. This Pelargonium grandiflorum (Geranium) protein is Ribulose bisphosphate carboxylase large chain.